We begin with the raw amino-acid sequence, 1819 residues long: MASITQLFDDLCEALLPAAKTHLGQRSVNRKRAKRSLKKVAYNALFTNLFQDETQQLQPDMSKLPARNKILMLSFDLRVGGLGPKADRLEELVEELEAAPCCPLLEVGSVLDLLVQLAGSGPPQVLPRKRDYFLNNKHVGRNVPYSGYDCDDLSVFEMDVQSLISREECLCHSMIQETLQVMEAAPGTGLPTVGLFSFGDPCGDRFERDTRVSLFGALVHSRTYDMDVRLGLPPVPDNADLSGLAIKVPPSVDQWEDEGFQSASNLTPDSQSEPSVTPDVDLWEAALTYEASKRRCWERVGCPPGHREEPYLTEAGRDAFDKFCRLHQGELQLLAGGVLQAPQPVLVKECELVKDVLNVLIGVVSATFSLCQPAQAFVVKRGVHVSGASPESISSLLSEVAEYGTCYTRLSHFSLQPVLDSLYSKGLVFQAFTSGLRRYLQYYRACVLSTPPTLSLLTIGFLFKKLGRQLRYLAELCGVGAVLPGTCGGGPRAAFPTGVKLLSYLYQEALHNCSNEHYPVLLSLLKTSCEPYTRFIHDWVYSGVFRDAYGEFMIQVNHEYLSFRDKLYWTHGYVLISKEVEDCVPVFLKHIAHDIYVCGKTINLLKLCCPRHYLCWSDVPVPRISVIFSLEELKEIEKDCAVYVGRMERVARHSSVSKEEKELRMEIAKQELIAHAREAASRVLSALSDRQMSERMALDARKREQFQRLKEQFVKDQERRQAARQEELDDDFSYARELRDRERRLKSLEEELERKARQALVDHYSKLSAEAARREQKALWRIQRHRLESARLRFLLEDEKHIQEMLKAVSEAHQPQEPPDVLLSVHPQVTSPGPEHPEGGQGCDSGSAEQHSPAWDGWNRPGLLTPQPLKPLAVGAGGRGLQQAEGARPFSDSLSIGDFLPVGPGAEPSVQTGMVPLLEVALQTINLDLPPSAPGEAPAAASTQPSRPQEYDFSTVLRPAVATSPAPGPLQAAECSLGSSGLQLWEDSCGKMDACGSASRETLLPSHPPRRAALEEGSSQPTERLFGQVSGGGLPTGDYASEIAPTRPRWNTHGHVSDASIRVGENVSDVAPTQPRWNTHGHVSNASISLGESVSDVAPTRPRWNIHGHVSNASIRVGENVSDVAPTRPRWNTHGHVSNASIRVGENVSDVAPTRPRWNTHGHVSDASISLGESVSDMAPARPRWNTHGHVSDASISLGESVSDMAPTRPRWNTHGHVSDTSIRVGENVSDVAPIRSRCNTHGHVSDASISLGEPVSDVVSTRPRWNTHVPIPPPHMVLGALSPEAEPNTPRPQQSPPGHTSQSALSLGAQSTVLDCGPRLPVEVGPSLSSPSSGCGEGSISVGENVSDVAPTQPWWPNTPGDSVSEELGPGRSGDTEDLSPNWPLNSQEDTAAQSSPGRGEEAEASAAEAQGGEQAYLAGLAGQYHLERYPDSYESMSEPPIAHLLRPVLPRAFAFPVDPQVQSAADETAVQLSELLTLPVLMKRSITAPLAAHISLVNKAAVDYFFVELHLEAHYEALRHFLLMEDGEFAQSLSDLLFEKLGAGQTPGELLNPLVLNSVLSKALQCSLHGDTPHASNLSLALKYLPEVFAPNAPDVLSCLELRYKVDWPLNIVITEGCVSKYSGVFSFLLQLKLMMWALKDVCFHLKRTALLSHMAGSVQFRQLQLFKHEMQHFVKVIQGYIANQILHVTWCEFRARLATVGDLEEIQRAHAEYLHKAVFRGLLTEKAAPVMNVIHSIFSLVLKFRSQLISQAWGPPGGPRGAEHPNFALMQQSYNTFKYYSHFLFKVVTKLVNRGYQPHLEDFLLRINFNNYYQDA.

Disordered regions lie at residues 810 to 889, 929 to 951, and 1000 to 1023; these read SEAH…GARP, LPPS…PQEY, and RETL…QPTE. 9 consecutive repeat copies span residues 1027–1053, 1054–1080, 1081–1107, 1108–1134, 1135–1161, 1162–1188, 1189–1215, 1216–1242, and 1243–1269. The segment at 1027 to 1269 is 9 X 27 AA tandem repeats; that stretch reads GQVSGGGLPT…VSTRPRWNTH (243 aa). Positions 1271–1412 are disordered; sequence PIPPPHMVLG…EAEASAAEAQ (142 aa). Polar residues predominate over residues 1297–1314; it reads PPGHTSQSALSLGAQSTV. Over residues 1321–1335 the composition is skewed to low complexity; sequence LPVEVGPSLSSPSSG. Residues 1384–1398 show a composition bias toward polar residues; sequence WPLNSQEDTAAQSSP.

This sequence belongs to the TUBGCP family. In terms of assembly, component of the gamma-tubulin ring complex (gTuRC) consisting of TUBGCP2, TUBGCP3, TUBGCP4, TUBGCP5 and TUBGCP6 and gamma-tubulin TUBG1 or TUBG2. TUBGCP2, TUBGCP3, TUBGCP4, TUBGCP5 and TUBGCP6 assemble in a 5:5:2:1:1 stoichiometry; each is associated with a gamma-tubulin, thereby arranging 14 gamma-tubulins in a helical manner. Gamma-tubulin at the first position is blocked by TUBGCP3 at the last position, allowing 13 protafilaments to grow into a microtubule. The gTuRC (via TUBGCP3 and TUBGCP6) interacts with ACTB and MZT1; the interactions form a luminal bridge that stabilizes the initial structure during complex assembly. The gTuRC (via TUBGCP2) interacts with MZT2A/MZT2B and CDK5RAP2 (via CM1 motif); the interactions play a role in gTuRC activation.

Its subcellular location is the cytoplasm. The protein localises to the cytoskeleton. It is found in the microtubule organizing center. It localises to the centrosome. Component of the gamma-tubulin ring complex (gTuRC) which mediates microtubule nucleation. The gTuRC regulates the minus-end nucleation of alpha-beta tubulin heterodimers that grow into microtubule protafilaments, a critical step in centrosome duplication and spindle formation. The sequence is that of Gamma-tubulin complex component 6 (TUBGCP6) from Homo sapiens (Human).